The sequence spans 85 residues: Putative membrane protein insertion efficiency factor (85 aa).

Belongs to the UPF0161 family.

The protein localises to the cell inner membrane. Functionally, could be involved in insertion of integral membrane proteins into the membrane. The protein is Putative membrane protein insertion efficiency factor of Vibrio atlanticus (strain LGP32) (Vibrio splendidus (strain Mel32)).